A 397-amino-acid polypeptide reads, in one-letter code: Phosphoglycerate kinase (397 aa).

Residues 25–27, arginine 41, 64–67, arginine 118, and arginine 151 contribute to the substrate site; these read DLN and HLGR. Residues lysine 202, glutamate 324, and 350–353 contribute to the ATP site; that span reads GGDT.

Belongs to the phosphoglycerate kinase family. Monomer.

Its subcellular location is the cytoplasm. It carries out the reaction (2R)-3-phosphoglycerate + ATP = (2R)-3-phospho-glyceroyl phosphate + ADP. It functions in the pathway carbohydrate degradation; glycolysis; pyruvate from D-glyceraldehyde 3-phosphate: step 2/5. In Janthinobacterium sp. (strain Marseille) (Minibacterium massiliensis), this protein is Phosphoglycerate kinase.